The primary structure comprises 498 residues: UDP-N-acetylmuramate--L-alanine ligase (498 aa).

133-139 (GSSGKTT) provides a ligand contact to ATP.

Belongs to the MurCDEF family.

The protein localises to the cytoplasm. The catalysed reaction is UDP-N-acetyl-alpha-D-muramate + L-alanine + ATP = UDP-N-acetyl-alpha-D-muramoyl-L-alanine + ADP + phosphate + H(+). Its pathway is cell wall biogenesis; peptidoglycan biosynthesis. Cell wall formation. The polypeptide is UDP-N-acetylmuramate--L-alanine ligase (Wolbachia pipientis wMel).